The following is a 66-amino-acid chain: Large ribosomal subunit protein bL32 (66 aa).

It belongs to the bacterial ribosomal protein bL32 family.

This is Large ribosomal subunit protein bL32 from Rickettsia bellii (strain OSU 85-389).